Consider the following 47-residue polypeptide: Variabilin (47 aa).

The Cell attachment site signature appears at 32–34 (RGD).

In terms of processing, contains 2 disulfide bonds. In terms of tissue distribution, expressed in salivary glands.

Its subcellular location is the secreted. In terms of biological role, potently inhibits platelet aggregation induced by ADP (IC(50)=157 nM, complete inhibition at 514 nM). Also inhibits platelet aggregation induced by collagen and by the thrombin receptor peptide SFLLRNP. Is a potent antagonist of the fibrinogen receptor glycoprotein IIb-IIIa (ITGA2B/ITGB3) and the vitronectin receptor alpha-v/beta-3 (ITGAV/ITGB3). The protein is Variabilin of Dermacentor variabilis (American dog tick).